The sequence spans 918 residues: UPF0182 protein CPF_0011 (918 aa).

The next 7 helical transmembrane spans lie at 8–28 (TVLISILLLVVVFFVSTNFII), 46–66 (LIAICKLFVPIFILYFCVIAI), 91–111 (FLLSNLVISILGAGATATTQW), 151–171 (AISLIIILVLITVIIYLALGF), 200–220 (LAVLASVLSLLIGCSYLLKSY), 243–263 (IFYKVIAVACVISSIVVFISI), and 271–291 (IIISIASIAVLIVLEPVVAIF). The segment covering 857 to 869 (EENKNSNKDETPK) has biased composition (basic and acidic residues). The disordered stretch occupies residues 857 to 876 (EENKNSNKDETPKNEITSDN).

This sequence belongs to the UPF0182 family.

Its subcellular location is the cell membrane. The polypeptide is UPF0182 protein CPF_0011 (Clostridium perfringens (strain ATCC 13124 / DSM 756 / JCM 1290 / NCIMB 6125 / NCTC 8237 / Type A)).